The primary structure comprises 431 residues: Tol-Pal system protein TolB (431 aa).

An N-terminal signal peptide occupies residues 1 to 26 (MSLMTKLGFRALVASCLITAGSAANA). The disordered stretch occupies residues 406–431 (DGSAPPQILSVQGGSVREPSWGPFMQ).

Belongs to the TolB family. The Tol-Pal system is composed of five core proteins: the inner membrane proteins TolA, TolQ and TolR, the periplasmic protein TolB and the outer membrane protein Pal. They form a network linking the inner and outer membranes and the peptidoglycan layer.

Its subcellular location is the periplasm. Functionally, part of the Tol-Pal system, which plays a role in outer membrane invagination during cell division and is important for maintaining outer membrane integrity. The protein is Tol-Pal system protein TolB of Burkholderia cenocepacia (strain ATCC BAA-245 / DSM 16553 / LMG 16656 / NCTC 13227 / J2315 / CF5610) (Burkholderia cepacia (strain J2315)).